We begin with the raw amino-acid sequence, 208 residues long: Guanylate kinase (208 aa).

Positions 5 to 184 constitute a Guanylate kinase-like domain; it reads GLLIVFSGPS…AAERVKCVIE (180 aa). ATP is bound at residue 12–19; it reads GPSGVGKG.

It belongs to the guanylate kinase family.

It is found in the cytoplasm. It catalyses the reaction GMP + ATP = GDP + ADP. Its function is as follows. Essential for recycling GMP and indirectly, cGMP. The sequence is that of Guanylate kinase from Streptococcus pneumoniae (strain ATCC BAA-255 / R6).